Consider the following 331-residue polypeptide: Adenosine deaminase (331 aa).

2 residues coordinate Zn(2+): His12 and His14. The substrate site is built by His14, Asp16, and Gly170. Position 197 (His197) interacts with Zn(2+). The active-site Proton donor is Glu200. Position 278 (Asp278) interacts with Zn(2+). Asp279 serves as a coordination point for substrate.

It belongs to the metallo-dependent hydrolases superfamily. Adenosine and AMP deaminases family. Adenosine deaminase subfamily. Zn(2+) is required as a cofactor.

The enzyme catalyses adenosine + H2O + H(+) = inosine + NH4(+). It carries out the reaction 2'-deoxyadenosine + H2O + H(+) = 2'-deoxyinosine + NH4(+). Catalyzes the hydrolytic deamination of adenosine and 2-deoxyadenosine. In Shewanella baltica (strain OS155 / ATCC BAA-1091), this protein is Adenosine deaminase.